Reading from the N-terminus, the 533-residue chain is Subtilisin-like serine protease pepC (533 aa).

The first 16 residues, 1–16 (MKGILGLSLLPLLTAA), serve as a signal peptide directing secretion. Residues 43 to 136 (SYIVVFKKHV…IERDSEVHTM (94 aa)) form the Inhibitor I9 domain. One can recognise a Peptidase S8 domain in the interval 145 to 450 (PWGLARISHR…VGIYKRNELT (306 aa)). Residues Asp-181 and His-213 each act as charge relay system in the active site. Residue Asn-283 is glycosylated (N-linked (GlcNAc...) asparagine). Cys-320 and Cys-351 are oxidised to a cystine. The Charge relay system role is filled by Ser-379. N-linked (GlcNAc...) asparagine glycosylation occurs at Asn-435. Residues 496–513 (KSCSPRSLVPSTARSRMP) are compositionally biased toward polar residues. A disordered region spans residues 496–519 (KSCSPRSLVPSTARSRMPSSHRSE).

The protein belongs to the peptidase S8 family.

The protein is Subtilisin-like serine protease pepC (pepC) of Aspergillus niger.